Consider the following 362-residue polypeptide: Spermidine/putrescine import ATP-binding protein PotA (362 aa).

Positions 4 to 235 (IKLDHITKQY…PVNDFVARFI (232 aa)) constitute an ABC transporter domain. 37-44 (GPSGSGKT) provides a ligand contact to ATP.

Belongs to the ABC transporter superfamily. Spermidine/putrescine importer (TC 3.A.1.11.1) family. As to quaternary structure, the complex is composed of two ATP-binding proteins (PotA), two transmembrane proteins (PotB and PotC) and a solute-binding protein (PotD).

The protein localises to the cell membrane. It catalyses the reaction ATP + H2O + polyamine-[polyamine-binding protein]Side 1 = ADP + phosphate + polyamineSide 2 + [polyamine-binding protein]Side 1.. In terms of biological role, part of the ABC transporter complex PotABCD involved in spermidine/putrescine import. Responsible for energy coupling to the transport system. The chain is Spermidine/putrescine import ATP-binding protein PotA from Lactobacillus delbrueckii subsp. bulgaricus (strain ATCC BAA-365 / Lb-18).